A 357-amino-acid chain; its full sequence is RNA 3'-terminal phosphate cyclase (357 aa).

ATP is bound by residues Gln102 and 293–296 (HMGD). The active-site Tele-AMP-histidine intermediate is the His319.

This sequence belongs to the RNA 3'-terminal cyclase family. Type 1 subfamily.

The protein resides in the cytoplasm. It carries out the reaction a 3'-end 3'-phospho-ribonucleotide-RNA + ATP = a 3'-end 2',3'-cyclophospho-ribonucleotide-RNA + AMP + diphosphate. Catalyzes the conversion of 3'-phosphate to a 2',3'-cyclic phosphodiester at the end of RNA. The mechanism of action of the enzyme occurs in 3 steps: (A) adenylation of the enzyme by ATP; (B) transfer of adenylate to an RNA-N3'P to produce RNA-N3'PP5'A; (C) and attack of the adjacent 2'-hydroxyl on the 3'-phosphorus in the diester linkage to produce the cyclic end product. The biological role of this enzyme is unknown but it is likely to function in some aspects of cellular RNA processing. The chain is RNA 3'-terminal phosphate cyclase from Staphylothermus marinus (strain ATCC 43588 / DSM 3639 / JCM 9404 / F1).